Here is a 264-residue protein sequence, read N- to C-terminus: Meiotically up-regulated gene 162 protein (264 aa).

7 helical membrane passes run 18–38 (IVIFFDILIILLGYIGTWNLK), 54–74 (LWIYIRGTVLCADCIFTAGSA), 84–104 (VFQVSSLMFYGLMMEFFGYSF), 140–160 (IISIIEIPIKLHFILNVLLFL), 174–194 (HLSYHLFALWVINLYIWIKLI), 199–219 (FVLGFLAGLSVLLLNTGSLIT), and 223–243 (LISYFNLLTSCLIIFPSIWIY).

It is found in the endoplasmic reticulum membrane. Has a role in meiosis. This is Meiotically up-regulated gene 162 protein (mug162) from Schizosaccharomyces pombe (strain 972 / ATCC 24843) (Fission yeast).